The following is a 410-amino-acid chain: Adenosylhomocysteinase (410 aa).

Substrate is bound by residues aspartate 117 and glutamate 142. Threonine 143–threonine 145 is an NAD(+) binding site. 2 residues coordinate substrate: lysine 172 and aspartate 176. Residues asparagine 177, glycine 206–glycine 211, glutamate 229, alanine 285–histidine 287, and asparagine 332 each bind NAD(+).

It belongs to the adenosylhomocysteinase family. Requires NAD(+) as cofactor.

It localises to the cytoplasm. It carries out the reaction S-adenosyl-L-homocysteine + H2O = L-homocysteine + adenosine. It functions in the pathway amino-acid biosynthesis; L-homocysteine biosynthesis; L-homocysteine from S-adenosyl-L-homocysteine: step 1/1. Its function is as follows. May play a key role in the regulation of the intracellular concentration of adenosylhomocysteine. The polypeptide is Adenosylhomocysteinase (Thermoplasma acidophilum (strain ATCC 25905 / DSM 1728 / JCM 9062 / NBRC 15155 / AMRC-C165)).